The following is a 648-amino-acid chain: Probable ATP-dependent RNA helicase DDX43 (648 aa).

The tract at residues 1-60 (MSHHGGAPKASTWVVASRRSSTVSRAPERRPAEELNRTGPEGYSVGRGGRWRGTSRPPEA) is disordered. The segment covering 10–25 (ASTWVVASRRSSTVSR) has biased composition (low complexity). Positions 26 to 36 (APERRPAEELN) are enriched in basic and acidic residues. One can recognise a KH domain in the interval 67–128 (ELPLCFALKS…AMQTKAKAVI (62 aa)). The Q motif motif lies at 242 to 270 (TFDDAFQCYPEVMENIKKAGFQKPTPIQS). The region spanning 273–448 (WPIVLQGIDL…QSYLKEPMIV (176 aa)) is the Helicase ATP-binding domain. 286 to 293 (AQTGTGKT) provides a ligand contact to ATP. Residues 396-399 (DEAD) carry the DEAD box motif. The region spanning 460-621 (SVKQNIIVTT…SIPEELVSMA (162 aa)) is the Helicase C-terminal domain. A compositionally biased stretch (basic and acidic residues) spans 628-641 (QQKREMERKMERPQ). Residues 628–648 (QQKREMERKMERPQGRPKKFH) are disordered.

Belongs to the DEAD box helicase family. In terms of tissue distribution, expressed in testis. Expressed in many tumors of various histological types at a level that is 100-fold higher than the level observed in normal tissues except testis.

It catalyses the reaction ATP + H2O = ADP + phosphate + H(+). This chain is Probable ATP-dependent RNA helicase DDX43 (DDX43), found in Homo sapiens (Human).